The primary structure comprises 249 residues: 5'-nucleotidase SurE (249 aa).

A divalent metal cation-binding residues include Asp-9, Asp-10, Ser-40, and Asn-92.

This sequence belongs to the SurE nucleotidase family. A divalent metal cation is required as a cofactor.

The protein resides in the cytoplasm. The catalysed reaction is a ribonucleoside 5'-phosphate + H2O = a ribonucleoside + phosphate. Functionally, nucleotidase that shows phosphatase activity on nucleoside 5'-monophosphates. In Shewanella loihica (strain ATCC BAA-1088 / PV-4), this protein is 5'-nucleotidase SurE.